A 463-amino-acid polypeptide reads, in one-letter code: uncharacterized protein (463 aa).

The TRAM domain maps to leucine 12–lysine 70. [4Fe-4S] cluster contacts are provided by cysteine 83, cysteine 89, cysteine 92, and cysteine 171. Glutamine 295, tyrosine 324, glutamate 345, and aspartate 390 together coordinate S-adenosyl-L-methionine. Catalysis depends on cysteine 417, which acts as the Nucleophile.

It belongs to the class I-like SAM-binding methyltransferase superfamily. RNA M5U methyltransferase family.

This is an uncharacterized protein from Synechocystis sp. (strain ATCC 27184 / PCC 6803 / Kazusa).